Here is a 64-residue protein sequence, read N- to C-terminus: Translational regulator CsrA (64 aa).

It belongs to the CsrA/RsmA family. Homodimer; the beta-strands of each monomer intercalate to form a hydrophobic core, while the alpha-helices form wings that extend away from the core.

It is found in the cytoplasm. Its function is as follows. A key translational regulator that binds mRNA to regulate translation initiation and/or mRNA stability. Mediates global changes in gene expression, shifting from rapid growth to stress survival by linking envelope stress, the stringent response and the catabolite repression systems. Usually binds in the 5'-UTR; binding at or near the Shine-Dalgarno sequence prevents ribosome-binding, repressing translation, binding elsewhere in the 5'-UTR can activate translation and/or stabilize the mRNA. Its function is antagonized by small RNA(s). The sequence is that of Translational regulator CsrA from Methylococcus capsulatus (strain ATCC 33009 / NCIMB 11132 / Bath).